Consider the following 459-residue polypeptide: Sulfide:quinone oxidoreductase, mitochondrial (459 aa).

Residues 1-24 constitute a mitochondrion transit peptide; sequence MLTLNSTIKSVTGSFQSASMLARF. 35 to 39 provides a ligand contact to FAD; sequence GGGSA. Catalysis depends on cysteine persulfide intermediate residues C204 and C383.

Belongs to the SQRD family. FAD is required as a cofactor.

It localises to the mitochondrion. Catalyzes the oxidation of hydrogen sulfide, with the help of a quinone. The chain is Sulfide:quinone oxidoreductase, mitochondrial (hmt2) from Schizosaccharomyces pombe (strain 972 / ATCC 24843) (Fission yeast).